The sequence spans 938 residues: Isoleucine--tRNA ligase (938 aa).

The 'HIGH' region motif lies at 58 to 68; sequence PYANGSIHIGH. An N6-acetyllysine modification is found at K183. E561 serves as a coordination point for L-isoleucyl-5'-AMP. The 'KMSKS' region signature appears at 602 to 606; sequence KMSKS. Residue K605 participates in ATP binding. Zn(2+) is bound by residues C901, C904, C921, and C924.

This sequence belongs to the class-I aminoacyl-tRNA synthetase family. IleS type 1 subfamily. As to quaternary structure, monomer. Zn(2+) is required as a cofactor.

Its subcellular location is the cytoplasm. The enzyme catalyses tRNA(Ile) + L-isoleucine + ATP = L-isoleucyl-tRNA(Ile) + AMP + diphosphate. In terms of biological role, catalyzes the attachment of isoleucine to tRNA(Ile). As IleRS can inadvertently accommodate and process structurally similar amino acids such as valine, to avoid such errors it has two additional distinct tRNA(Ile)-dependent editing activities. One activity is designated as 'pretransfer' editing and involves the hydrolysis of activated Val-AMP. The other activity is designated 'posttransfer' editing and involves deacylation of mischarged Val-tRNA(Ile). The polypeptide is Isoleucine--tRNA ligase (Escherichia coli O7:K1 (strain IAI39 / ExPEC)).